The primary structure comprises 164 residues: Protein-export protein SecB (164 aa).

This sequence belongs to the SecB family. As to quaternary structure, homotetramer, a dimer of dimers. One homotetramer interacts with 1 SecA dimer.

It localises to the cytoplasm. One of the proteins required for the normal export of preproteins out of the cell cytoplasm. It is a molecular chaperone that binds to a subset of precursor proteins, maintaining them in a translocation-competent state. It also specifically binds to its receptor SecA. This Janthinobacterium sp. (strain Marseille) (Minibacterium massiliensis) protein is Protein-export protein SecB.